The sequence spans 1430 residues: DNA-directed RNA polymerase subunit beta' (1430 aa).

Zn(2+)-binding residues include C71, C73, C86, and C89. Positions 461, 463, and 465 each coordinate Mg(2+). Residues C815, C889, C896, and C899 each contribute to the Zn(2+) site. Residues 1388 to 1430 (RRQEAPAPAATPEQQAEEVFASLGQGEGEGPSPSDEASGPEVE) form a disordered region. Positions 1392-1405 (APAPAATPEQQAEE) are enriched in low complexity.

This sequence belongs to the RNA polymerase beta' chain family. The RNAP catalytic core consists of 2 alpha, 1 beta, 1 beta' and 1 omega subunit. When a sigma factor is associated with the core the holoenzyme is formed, which can initiate transcription. The cofactor is Mg(2+). Requires Zn(2+) as cofactor.

It carries out the reaction RNA(n) + a ribonucleoside 5'-triphosphate = RNA(n+1) + diphosphate. In terms of biological role, DNA-dependent RNA polymerase catalyzes the transcription of DNA into RNA using the four ribonucleoside triphosphates as substrates. The polypeptide is DNA-directed RNA polymerase subunit beta' (Halorhodospira halophila (strain DSM 244 / SL1) (Ectothiorhodospira halophila (strain DSM 244 / SL1))).